The chain runs to 256 residues: Homeobox-leucine zipper protein HOX18 (256 aa).

The segment at 52 to 116 is disordered; the sequence is YDHGRDEEQA…GGGGGGTRKK (65 aa). The segment covering 102 to 112 has biased composition (gly residues); the sequence is DGGSGGGGGGG. Residues 112 to 171 constitute a DNA-binding region (homeobox); it reads GTRKKLQLTKEQSTLLEDSFRVHNILSHAQKHELARQLKLKPRQVEVWFQNRRARTKLKQ. Positions 170 to 214 are leucine-zipper; the sequence is KQTEVDCEFLKRCCESLTEENKQLKHELMELRRLASPAAAAAGSQ.

The protein belongs to the HD-ZIP homeobox family. Class II subfamily. Expressed in roots, leaf sheaths and blades and panicles.

The protein resides in the nucleus. Functionally, probable transcription factor. The chain is Homeobox-leucine zipper protein HOX18 (HOX18) from Oryza sativa subsp. japonica (Rice).